We begin with the raw amino-acid sequence, 350 residues long: Biotin synthase (350 aa).

Positions 41-268 (NEVQISRLLS…KSRVRLSAGR (228 aa)) constitute a Radical SAM core domain. 3 residues coordinate [4Fe-4S] cluster: C56, C60, and C63. [2Fe-2S] cluster is bound by residues C100, C131, C191, and R263.

This sequence belongs to the radical SAM superfamily. Biotin synthase family. In terms of assembly, homodimer. [4Fe-4S] cluster serves as cofactor. Requires [2Fe-2S] cluster as cofactor.

It carries out the reaction (4R,5S)-dethiobiotin + (sulfur carrier)-SH + 2 reduced [2Fe-2S]-[ferredoxin] + 2 S-adenosyl-L-methionine = (sulfur carrier)-H + biotin + 2 5'-deoxyadenosine + 2 L-methionine + 2 oxidized [2Fe-2S]-[ferredoxin]. It functions in the pathway cofactor biosynthesis; biotin biosynthesis; biotin from 7,8-diaminononanoate: step 2/2. Functionally, catalyzes the conversion of dethiobiotin (DTB) to biotin by the insertion of a sulfur atom into dethiobiotin via a radical-based mechanism. The polypeptide is Biotin synthase (Shewanella frigidimarina (strain NCIMB 400)).